A 162-amino-acid polypeptide reads, in one-letter code: Probable chemoreceptor glutamine deamidase CheD (162 aa).

Belongs to the CheD family.

The enzyme catalyses L-glutaminyl-[protein] + H2O = L-glutamyl-[protein] + NH4(+). Functionally, probably deamidates glutamine residues to glutamate on methyl-accepting chemotaxis receptors (MCPs), playing an important role in chemotaxis. The chain is Probable chemoreceptor glutamine deamidase CheD from Clostridium botulinum (strain ATCC 19397 / Type A).